Here is a 391-residue protein sequence, read N- to C-terminus: Phosphoglycerate kinase (391 aa).

Substrate contacts are provided by residues 21 to 23, arginine 36, 59 to 62, arginine 114, and arginine 147; these read DLN and HLGR. ATP-binding positions include lysine 198, glutamate 315, and 344–347; that span reads GGDT.

This sequence belongs to the phosphoglycerate kinase family. As to quaternary structure, monomer.

The protein localises to the cytoplasm. The enzyme catalyses (2R)-3-phosphoglycerate + ATP = (2R)-3-phospho-glyceroyl phosphate + ADP. Its pathway is carbohydrate degradation; glycolysis; pyruvate from D-glyceraldehyde 3-phosphate: step 2/5. The sequence is that of Phosphoglycerate kinase from Actinobacillus succinogenes (strain ATCC 55618 / DSM 22257 / CCUG 43843 / 130Z).